A 125-amino-acid chain; its full sequence is Cu-Zn superoxide dismutase-like protein (125 aa).

A disulfide bond links cysteine 52 and cysteine 102.

This sequence belongs to the Cu-Zn superoxide dismutase family.

The protein resides in the host cytoplasm. Its function is as follows. Virion protein with no enzymatic activity. The sequence is that of Cu-Zn superoxide dismutase-like protein from Camelpox virus (strain M-96).